Consider the following 1893-residue polypeptide: Nestin (1893 aa).

M1 bears the N-acetylmethionine mark. The interval 1–7 (MEGCVGE) is head. A coil 1A region spans residues 8 to 43 (ESFQMWELNRRLEAYLTRVKTLEEQNQLLSAELGGL). In terms of domain architecture, IF rod spans 8–314 (ESFQMWELNR…TLLEAENSRL (307 aa)). Positions 44–55 (RAQSGDTSWRAR) are linker 1. Residues 56 to 151 (ADDELASLRI…AAHEEERAHL (96 aa)) are coil 1B. The disordered stretch occupies residues 150 to 172 (HLNAQAACAPRRPPAPPHGSPVR). Residues 152 to 174 (NAQAACAPRRPPAPPHGSPVRAP) form a linker 12 region. A coil 2A region spans residues 175–193 (EVEDLARRLGEVWRGAVRD). Residues 194–196 (YQE) are linker 2. The tract at residues 197 to 314 (RVAHMESSLG…TLLEAENSRL (118 aa)) is coil 2B. S312 carries the phosphoserine modification. The tail stretch occupies residues 315–1893 (QTPGRGSQAS…DGDSWSSGED (1579 aa)). T316 is subject to Phosphothreonine. S356 and S359 each carry phosphoserine. T389 is modified (phosphothreonine). Disordered stretches follow at residues 437-479 (PELE…SGSR), 507-529 (NSSAQKTQESGLDTEETQDSQGP), and 556-879 (KENC…NQKS). Positions 507–517 (NSSAQKTQESG) are enriched in polar residues. S562 bears the Phosphoserine mark. Basic and acidic residues-rich tracts occupy residues 572–595 (GPEKEKQIPLKSLEEKNVESEKTL) and 606–615 (LGKEDTRTED). Position 620 is a phosphoserine (S620). Basic and acidic residues-rich tracts occupy residues 634–646 (ESQEVVRPSKEGN) and 670–681 (MLERLVEKEDQS). S685 and S729 each carry phosphoserine. 4 stretches are compositionally biased toward basic and acidic residues: residues 717–730 (RLIEKESQESLRSP), 761–774 (RLIEKESQESLRSA), 802–818 (ILERLIEKESQESLRSP), and 846–879 (MLERLIEKESQESLKSPEENQRIGKPLERENQKS). Position 817 is a phosphoserine (S817). S903 is subject to Phosphoserine. 2 stretches are compositionally biased toward basic and acidic residues: residues 949-966 (LLEDKTHKSLGSLEDRNG) and 989-1051 (QRIV…KSLE). Residues 949-1130 (LLEDKTHKSL…ARSLGKENQE (182 aa)) are disordered. Phosphoserine is present on residues S1005 and S1049. Residue K1136 forms a Glycyl lysine isopeptide (Lys-Gly) (interchain with G-Cter in SUMO1); alternate linkage. A Glycyl lysine isopeptide (Lys-Gly) (interchain with G-Cter in SUMO2); alternate cross-link involves residue K1136. A phosphoserine mark is found at S1145 and S1166. The disordered stretch occupies residues 1155-1222 (ETAEEDLERR…ELSSLGKWNV (68 aa)). Over residues 1198-1212 (DENRETLTSLEKESQ) the composition is skewed to basic and acidic residues. Phosphoserine is present on residues S1216 and S1229. Residues 1237 to 1263 (EGLQEEQHQESLREVKQELPSSGNQQR) are disordered. The span at 1241 to 1253 (EEQHQESLREVKQ) shows a compositional bias: basic and acidic residues. The residue at position 1322 (S1322) is a Phosphoserine. Disordered stretches follow at residues 1336–1369 (DNLEGGALEVPVAQSMPEVTERDEDRAQAGEQDS) and 1388–1824 (EVVG…SEQV). Basic and acidic residues-rich tracts occupy residues 1354 to 1363 (VTERDEDRAQ) and 1393 to 1403 (EDPRHFAREEA). Acidic residues-rich tracts occupy residues 1458–1469 (ESMEGWEEEEAS) and 1561–1576 (QDWEEGREESEADDLG). Phosphoserine is present on residues S1570, S1594, S1686, S1695, S1772, and S1774. Acidic residues predominate over residues 1688-1709 (GFADEEESGEEGEEEDADEEGA). The span at 1773–1788 (GSEESESASLEGEEGQ) shows a compositional bias: acidic residues. Residues 1815–1824 (QSPNLDSEQV) are compositionally biased toward polar residues. A phosphoserine mark is found at S1866, S1889, and S1890. The disordered stretch occupies residues 1870–1893 (LGPSQPLKFTLSGVDGDSWSSGED).

It belongs to the intermediate filament family. Forms homodimers and homotetramers in vitro. In mixtures with other intermediate filament proteins such as vimentin and alpha-internexin, this protein preferentially forms heterodimers which can assemble to form intermediate filaments if nestin does not exceed 25%. Interacts with FHOD3. Constitutively phosphorylated. This increases during mitosis when the cytoplasmic intermediate filament network is reorganized. As to expression, CNS stem cells.

Functionally, required for brain and eye development. Promotes the disassembly of phosphorylated vimentin intermediate filaments (IF) during mitosis and may play a role in the trafficking and distribution of IF proteins and other cellular factors to daughter cells during progenitor cell division. Required for survival, renewal and mitogen-stimulated proliferation of neural progenitor cells. The protein is Nestin (Nes) of Rattus norvegicus (Rat).